Reading from the N-terminus, the 469-residue chain is 3-isopropylmalate dehydratase large subunit (469 aa).

[4Fe-4S] cluster contacts are provided by C349, C410, and C413.

This sequence belongs to the aconitase/IPM isomerase family. LeuC type 1 subfamily. Heterodimer of LeuC and LeuD. The cofactor is [4Fe-4S] cluster.

The catalysed reaction is (2R,3S)-3-isopropylmalate = (2S)-2-isopropylmalate. Its pathway is amino-acid biosynthesis; L-leucine biosynthesis; L-leucine from 3-methyl-2-oxobutanoate: step 2/4. Catalyzes the isomerization between 2-isopropylmalate and 3-isopropylmalate, via the formation of 2-isopropylmaleate. In Neisseria gonorrhoeae (strain NCCP11945), this protein is 3-isopropylmalate dehydratase large subunit.